The primary structure comprises 369 residues: 1-aminocyclopropane-1-carboxylate oxidase homolog 2 (369 aa).

The Fe2OG dioxygenase domain maps to 217 to 318 (KGLRMLCHYF…VSVACFFHTH (102 aa)). Fe cation is bound by residues H241, D243, and H297.

This sequence belongs to the iron/ascorbate-dependent oxidoreductase family. Fe cation serves as cofactor.

This chain is 1-aminocyclopropane-1-carboxylate oxidase homolog 2, found in Arabidopsis thaliana (Mouse-ear cress).